A 126-amino-acid polypeptide reads, in one-letter code: Small ribosomal subunit protein uS12 (126 aa).

Residues Met1–Pro28 form a disordered region. Asp89 is subject to 3-methylthioaspartic acid. The interval Ala104 to Lys126 is disordered. Residues Gly113–Lys126 show a composition bias toward basic residues.

The protein belongs to the universal ribosomal protein uS12 family. Part of the 30S ribosomal subunit. Contacts proteins S8 and S17. May interact with IF1 in the 30S initiation complex.

With S4 and S5 plays an important role in translational accuracy. Its function is as follows. Interacts with and stabilizes bases of the 16S rRNA that are involved in tRNA selection in the A site and with the mRNA backbone. Located at the interface of the 30S and 50S subunits, it traverses the body of the 30S subunit contacting proteins on the other side and probably holding the rRNA structure together. The combined cluster of proteins S8, S12 and S17 appears to hold together the shoulder and platform of the 30S subunit. The sequence is that of Small ribosomal subunit protein uS12 from Synechocystis sp. (strain ATCC 27184 / PCC 6803 / Kazusa).